The primary structure comprises 299 residues: Lipoyl synthase (299 aa).

Residues Cys45, Cys50, Cys56, Cys71, Cys75, Cys78, and Ser284 each contribute to the [4Fe-4S] cluster site. Residues 57 to 273 form the Radical SAM core domain; that stretch reads YSKGTATFMI…GDVALAKDFL (217 aa).

This sequence belongs to the radical SAM superfamily. Lipoyl synthase family. [4Fe-4S] cluster serves as cofactor.

It localises to the cytoplasm. The enzyme catalyses [[Fe-S] cluster scaffold protein carrying a second [4Fe-4S](2+) cluster] + N(6)-octanoyl-L-lysyl-[protein] + 2 oxidized [2Fe-2S]-[ferredoxin] + 2 S-adenosyl-L-methionine + 4 H(+) = [[Fe-S] cluster scaffold protein] + N(6)-[(R)-dihydrolipoyl]-L-lysyl-[protein] + 4 Fe(3+) + 2 hydrogen sulfide + 2 5'-deoxyadenosine + 2 L-methionine + 2 reduced [2Fe-2S]-[ferredoxin]. It functions in the pathway protein modification; protein lipoylation via endogenous pathway; protein N(6)-(lipoyl)lysine from octanoyl-[acyl-carrier-protein]: step 2/2. Catalyzes the radical-mediated insertion of two sulfur atoms into the C-6 and C-8 positions of the octanoyl moiety bound to the lipoyl domains of lipoate-dependent enzymes, thereby converting the octanoylated domains into lipoylated derivatives. The chain is Lipoyl synthase from Desulfotalea psychrophila (strain LSv54 / DSM 12343).